The sequence spans 911 residues: Gag-Pro polyprotein (911 aa).

A propeptide spanning residues 101 to 161 (AAVAQTEEIL…TKKPKRFPVL (61 aa)) is cleaved from the precursor. 2 stretches are compositionally biased toward polar residues: residues 113 to 125 (NSQTDLTKTSQNP) and 140 to 152 (KSSSLQDKGLSST). The interval 113 to 178 (NSQTDLTKTS…DPEDPNPSEV (66 aa)) is disordered. Positions 202-205 (PPPY) match the PPXY motif motif. A PTAP/PSAP motif motif is present at residues 210 to 213 (PSAP). Residues 216-257 (MAVVNPKEELKEKIAQLEEQIKLEELHQALISKLQKLKTGNE) adopt a coiled-coil conformation. The disordered stretch occupies residues 260 to 279 (THPDTAGGLSRTPHWPGQHI). 2 CCHC-type zinc fingers span residues 547–564 (GCCFKCGKKGHFAKNCHE) and 576–593 (GLCPRCKRGKHWANECKS). Residues 592–626 (KSKTDNQGNPIPPHQGNRVEGPAPGPETSLWGSQL) are disordered. The region spanning 780–856 (FTGLIDTGAD…LPVNLWGRDL (77 aa)) is the Peptidase A2 domain. Residue aspartate 785 is the Protease; shared with dimeric partner of the active site. A G-patch domain is found at 867 to 911 (PNDIVTAQMLAQGYSPGKGLGKKENGILHPIPNQGQSNKKGFGNF).

In terms of assembly, homodimer. As to quaternary structure, interacts with the reverse transcriptase/ribonuclease H. Homotrimer. Post-translationally, released by autocatalytic processing. The protease can undergo further autoprocessing to yield 2 shorter but enzymatically active forms of 12 kDa and 13 kDa without the GDP domain. the 12 kDa form is monomeric. Myristoylated. Myristoylation of the matrix (MA) domain mediates the transport and binding of Gag polyproteins to the host plasma membrane and is required for the assembly of viral particles. In terms of processing, specific enzymatic cleavages in vivo yield mature proteins.

The protein localises to the virion. The catalysed reaction is dUTP + H2O = dUMP + diphosphate + H(+). Its function is as follows. Matrix protein. In terms of biological role, nucleocapsid protein p14: Nucleocapsid protein. Functionally, capsid protein. The aspartyl protease mediates proteolytic cleavages of Gag and Gag-Pol polyproteins during or shortly after the release of the virion from the plasma membrane. Cleavages take place as an ordered, step-wise cascade to yield mature proteins. This process is called maturation. Displays maximal activity during the budding process just prior to particle release from the cell. Its function is as follows. Enhances the activity of the reverse transcriptase. May be part of the mature RT. The polypeptide is Gag-Pro polyprotein (gag-pro) (Mason-Pfizer monkey virus (MPMV)).